Reading from the N-terminus, the 338-residue chain is Aspartate-semialdehyde dehydrogenase (338 aa).

Residues 13–16 (TGNV) and 41–42 (NS) each bind NADP(+). R101 provides a ligand contact to phosphate. The active-site Acyl-thioester intermediate is the C132. Q159 contributes to the substrate binding site. 162–163 (SG) contacts NADP(+). K216 contributes to the phosphate binding site. Residue R237 participates in substrate binding. H244 serves as the catalytic Proton acceptor. An NADP(+)-binding site is contributed by N317.

The protein belongs to the aspartate-semialdehyde dehydrogenase family. As to quaternary structure, homodimer.

It carries out the reaction L-aspartate 4-semialdehyde + phosphate + NADP(+) = 4-phospho-L-aspartate + NADPH + H(+). It functions in the pathway amino-acid biosynthesis; L-lysine biosynthesis via DAP pathway; (S)-tetrahydrodipicolinate from L-aspartate: step 2/4. The protein operates within amino-acid biosynthesis; L-methionine biosynthesis via de novo pathway; L-homoserine from L-aspartate: step 2/3. Its pathway is amino-acid biosynthesis; L-threonine biosynthesis; L-threonine from L-aspartate: step 2/5. Functionally, catalyzes the NADPH-dependent formation of L-aspartate-semialdehyde (L-ASA) by the reductive dephosphorylation of L-aspartyl-4-phosphate. The chain is Aspartate-semialdehyde dehydrogenase from Rickettsia bellii (strain RML369-C).